The sequence spans 202 residues: MKDKDIKEEVLKEEINKEVNEELKNEEVKEETHEHEHKHGGHTCCGKHGHKHNDEEIGKLKAEIEEWKNEYLRKQADFQNFTKRKEKEVDELKKFASEKIITQFLGSLDNLERAIESSIESKDFDSLLKGIEMIVRNLKDIMSAEGVEEIKTEGVYDPVYHHAVGVEANEDFKEDEIVKVLQKGYMMKGKVIRPAMVIVCKK.

Basic and acidic residues predominate over residues 21–37 (EELKNEEVKEETHEHEH). The tract at residues 21-52 (EELKNEEVKEETHEHEHKHGGHTCCGKHGHKH) is disordered. The span at 38–51 (KHGGHTCCGKHGHK) shows a compositional bias: basic residues.

It belongs to the GrpE family. In terms of assembly, homodimer.

The protein resides in the cytoplasm. Functionally, participates actively in the response to hyperosmotic and heat shock by preventing the aggregation of stress-denatured proteins, in association with DnaK and GrpE. It is the nucleotide exchange factor for DnaK and may function as a thermosensor. Unfolded proteins bind initially to DnaJ; upon interaction with the DnaJ-bound protein, DnaK hydrolyzes its bound ATP, resulting in the formation of a stable complex. GrpE releases ADP from DnaK; ATP binding to DnaK triggers the release of the substrate protein, thus completing the reaction cycle. Several rounds of ATP-dependent interactions between DnaJ, DnaK and GrpE are required for fully efficient folding. This chain is Protein GrpE, found in Fusobacterium nucleatum subsp. polymorphum (Fusobacterium polymorphum).